A 996-amino-acid chain; its full sequence is MAAIMIGSISVPIVESARCATVQTGNRVNIVAPGHVAVCKPQMKSHSYYKHASEKLSKQASESINILNSFFDTDPEMRFRLTRNEMSKVKKGPNGRMILRKPRAQRVLERISFEKIEKGAERQVLPWRVYATVTSIINTFTDERNGIANSSLRSPFYKRSCRKEKKKIVCENVVRSASVNNLCDRVLKIAREKNIPVEMIGKKKNRHTLTFKNFKGSFIGKVSLAHERGQMRHVEMSYEQFGFILQAICRVTNTRCVRDEDIKPGCSGWVLGDDHELTQKFSRLPCLVIRGRDDEGIVNALEPVFFYDDVDHYSSQPEVQFFQGWRRMFDNFKPSSDHVCKVDHGNEECGELAAIFSQALFPVVKLSCQTCREKLSRVSFEEFKDSLAINFTVHKSEWDSLKENPHHDNVLKLIKGATQATQNLKLSSEVMKLVQNHTSTHMKQIQDINRALMKGSLVTQDELDLALKQLLEMTQWFKNHMHLTGEEALKTFRNKRSSKAMINPSLLCDNQLDKNGNFVWGERGYHSKRLFKNFFEEVIPSEGYTKYIVRNFPNGTRKLAIGSLIVPLNLDRARTALLGESIEKEPLTSACVSQQNGNYIHSCCCVTMDDGTPMYSDVKSPTKRHLVIGASGDPKYIDLPASEADRMYIAKEGYCYLNIFLAMLVNVNENEAKDFTKMIRDVLIPMLGQWPSLMDVATAAYILGVFHPETRCAELPRILVDHATQTMHVIDSYGSLTVGYHVLKAGTVNHLIQFASNDLQSEMKHYRVGGTPTQRIKLEEQLIKGIFKPKLMMQLLQDDPYVLILGMVSPTILVHMYRMRHFERGIEMWIKRDHEVGKIFVILEQLTRKVALTEVLVDQLDLISEASPHLLEIMKGCQDNQRAYVPALDLLTVQVEREFSNKELKVNGYPDLQQTLYDMREKNICKAIARFMARAKLAGKIMCNRAIEAILDFYGEKIDPASKRRKARIFAAICSRVLYHDPSTCKEHSRCRHAQI.

A Peptidase S30 domain is found at 173–313; that stretch reads VVRSASVNNL…VFFYDDVDHY (141 aa). Residues H226, E235, and S267 each act as for P1 proteinase activity in the active site. The short motif at 365 to 368 is the Involved in interaction with stylet and aphid transmission element; sequence KLSC. Residues 621-623 carry the Involved in virions binding and aphid transmission motif; sequence PTK. The region spanning 647 to 769 is the Peptidase C6 domain; it reads MYIAKEGYCY…QSEMKHYRVG (123 aa). Active-site for helper component proteinase activity residues include C655 and H728.

This sequence belongs to the potyviridae P3N-PIPO polyprotein family. In terms of assembly, interacts (via PIPO domain) with host PCaP1 protein; this interaction may help to anchor the movement complex to the plasma membrane from which the complex could move to the plasmodesmata. In terms of processing, potyviral RNA is expressed as two polyproteins which undergo post-translational proteolytic processing. Genome polyprotein is processed by NIa-pro, P1 and HC-pro proteinases resulting in the production of at least ten individual proteins. P3N-PIPO is cleaved by P1 and HC-pro proteinases resulting in the production of three individual proteins. The P1 proteinase and the HC-pro cleave only their respective C-termini autocatalytically.

Its subcellular location is the host cell junction. It localises to the host plasmodesma. It carries out the reaction Hydrolyzes a Gly-|-Gly bond at its own C-terminus, commonly in the sequence -Tyr-Xaa-Val-Gly-|-Gly, in the processing of the potyviral polyprotein.. Required for aphid transmission and also has proteolytic activity. Only cleaves a Gly-Gly dipeptide at its own C-terminus. Interacts with virions and aphid stylets. Acts as a suppressor of RNA-mediated gene silencing, also known as post-transcriptional gene silencing (PTGS), a mechanism of plant viral defense that limits the accumulation of viral RNAs. May have RNA-binding activity. Functionally, allows efficient cell to cell propagation, by bypassing the host cell wall barrier. Transports viral genome to neighboring plant cells directly through plasmosdesmata, without any budding. The polypeptide is P3N-PIPO polyprotein (Zucchini yellow mosaic virus (strain Reunion Island) (ZYMV)).